A 362-amino-acid polypeptide reads, in one-letter code: 3-dehydroquinate synthase (362 aa).

Residues 74–79, 108–112, 132–133, K145, K154, and 172–175 each bind NAD(+); these read DGEGYK, GVIGD, TT, and TLDT. Zn(2+)-binding residues include E187, H250, and H267.

This sequence belongs to the sugar phosphate cyclases superfamily. Dehydroquinate synthase family. Requires Co(2+) as cofactor. The cofactor is Zn(2+). NAD(+) serves as cofactor.

It is found in the cytoplasm. The enzyme catalyses 7-phospho-2-dehydro-3-deoxy-D-arabino-heptonate = 3-dehydroquinate + phosphate. The protein operates within metabolic intermediate biosynthesis; chorismate biosynthesis; chorismate from D-erythrose 4-phosphate and phosphoenolpyruvate: step 2/7. Catalyzes the conversion of 3-deoxy-D-arabino-heptulosonate 7-phosphate (DAHP) to dehydroquinate (DHQ). The polypeptide is 3-dehydroquinate synthase (Citrifermentans bemidjiense (strain ATCC BAA-1014 / DSM 16622 / JCM 12645 / Bem) (Geobacter bemidjiensis)).